The sequence spans 227 residues: Lipoprotein-releasing system ATP-binding protein LolD (227 aa).

The ABC transporter domain maps to 7-227 (LSCRDLGKSY…HLQEGHLVAI (221 aa)). 43–50 (GTSGSGKS) contacts ATP.

It belongs to the ABC transporter superfamily. Lipoprotein translocase (TC 3.A.1.125) family. The complex is composed of two ATP-binding proteins (LolD) and two transmembrane proteins (LolC and LolE).

The protein localises to the cell inner membrane. In terms of biological role, part of the ABC transporter complex LolCDE involved in the translocation of mature outer membrane-directed lipoproteins, from the inner membrane to the periplasmic chaperone, LolA. Responsible for the formation of the LolA-lipoprotein complex in an ATP-dependent manner. In Pseudomonas fluorescens (strain ATCC BAA-477 / NRRL B-23932 / Pf-5), this protein is Lipoprotein-releasing system ATP-binding protein LolD.